The chain runs to 106 residues: UPF0145 protein PSEEN3024 (106 aa).

Belongs to the UPF0145 family.

This is UPF0145 protein PSEEN3024 from Pseudomonas entomophila (strain L48).